The primary structure comprises 491 residues: Glutamyl-tRNA(Gln) amidotransferase subunit A (491 aa).

Active-site charge relay system residues include K76 and S154. S178 (acyl-ester intermediate) is an active-site residue.

This sequence belongs to the amidase family. GatA subfamily. In terms of assembly, heterotrimer of A, B and C subunits.

It carries out the reaction L-glutamyl-tRNA(Gln) + L-glutamine + ATP + H2O = L-glutaminyl-tRNA(Gln) + L-glutamate + ADP + phosphate + H(+). Its function is as follows. Allows the formation of correctly charged Gln-tRNA(Gln) through the transamidation of misacylated Glu-tRNA(Gln) in organisms which lack glutaminyl-tRNA synthetase. The reaction takes place in the presence of glutamine and ATP through an activated gamma-phospho-Glu-tRNA(Gln). The chain is Glutamyl-tRNA(Gln) amidotransferase subunit A from Cereibacter sphaeroides (strain ATCC 17025 / ATH 2.4.3) (Rhodobacter sphaeroides).